We begin with the raw amino-acid sequence, 236 residues long: Large ribosomal subunit protein uL3 (236 aa).

Belongs to the universal ribosomal protein uL3 family. Part of the 50S ribosomal subunit. Forms a cluster with proteins L14 and L19.

Functionally, one of the primary rRNA binding proteins, it binds directly near the 3'-end of the 23S rRNA, where it nucleates assembly of the 50S subunit. The sequence is that of Large ribosomal subunit protein uL3 from Anaeromyxobacter dehalogenans (strain 2CP-1 / ATCC BAA-258).